A 148-amino-acid polypeptide reads, in one-letter code: Probable glycine cleavage system H protein 2 (148 aa).

The Lipoyl-binding domain maps to 32 to 114; the sequence is VIVVGITDIA…YGKGWLVKMK (83 aa). Lysine 73 is subject to N6-lipoyllysine.

Belongs to the GcvH family. In terms of assembly, the glycine cleavage system is composed of four proteins: P, T, L and H. It depends on (R)-lipoate as a cofactor.

Its function is as follows. The glycine cleavage system catalyzes the degradation of glycine. The H protein shuttles the methylamine group of glycine from the P protein to the T protein. The protein is Probable glycine cleavage system H protein 2 of Sulfurisphaera tokodaii (strain DSM 16993 / JCM 10545 / NBRC 100140 / 7) (Sulfolobus tokodaii).